Consider the following 412-residue polypeptide: Eukaryotic initiation factor 4A-1 (412 aa).

Residue Ala2 is modified to N-acetylalanine. The Q motif signature appears at 39–67; that stretch reads ESFDAMGLQENLLRGIYAYGFEKPSAIQQ. The Helicase ATP-binding domain maps to 70 to 240; it reads IVPFCKGLDV…RKFMSKPVRI (171 aa). 83–90 provides a ligand contact to ATP; sequence AQSGTGKT. The residue at position 104 (Ser104) is a Phosphoserine. Phosphothreonine is present on Thr145. A DEAD box motif is present at residues 188 to 191; sequence DEAD. A Helicase C-terminal domain is found at 251 to 412; it reads GIKQFYVNVE…ELPSNVADLL (162 aa).

This sequence belongs to the DEAD box helicase family. eIF4A subfamily. As to quaternary structure, eIF4F is a multi-subunit complex, the composition of which varies with external and internal environmental conditions. It is composed of at least EIF4A, EIF4E and EIF4G. Interacts with CDKA-1. Interacts with MRF1, MRF2, MRF3/ECIP1 and MRF4. Highly expressed in the whole plant.

The protein resides in the cytoplasm. The enzyme catalyses ATP + H2O = ADP + phosphate + H(+). Its function is as follows. ATP-dependent RNA helicase which is a subunit of the eIF4F complex involved in cap recognition and is required for mRNA binding to ribosome. In the current model of translation initiation, eIF4A unwinds RNA secondary structures in the 5'-UTR of mRNAs which is necessary to allow efficient binding of the small ribosomal subunit, and subsequent scanning for the initiator codon. The protein is Eukaryotic initiation factor 4A-1 of Arabidopsis thaliana (Mouse-ear cress).